We begin with the raw amino-acid sequence, 411 residues long: METCASFRLSPALLTSSTKIYDHVKSHLKSAMIQFSDLNTTPVMSIISNMGSAGIVTFQLTGAVSDTETLAEITEPLAFRNHSFGGTYLHSREFFGKEIEDILVRFYKRASTASKLPEFVETKITYNNSITETRHTSTVDSHVSPVEKYLQKCFVKAKLILSIKTCTMLQKWLRQNKNKSPVARLHINETLTVLVVTVGDECTTIEFKSFVLEPADAFLTLDKPGNFGAVLVDCTAVVNLECLIQAIGICKVPSVCVPAFKFYSGGIVEVSSAHLKQSKSPSATVSTVLLDASESLKQPAEQEQPTTSQPSDPQSSNSVDKPSPPRPSISQPVRRRAPPRAIISDSEEDSDSDSDQDCSTETQPETSYREEPKKFTPKPTAPPNKRKQFEPLKCPVEKKKKSNSNSFVSII.

The interval 296–411 (LKQPAEQEQP…SNSNSFVSII (116 aa)) is disordered. The segment covering 304–318 (QPTTSQPSDPQSSNS) has biased composition (low complexity). A compositionally biased stretch (acidic residues) spans 345–358 (DSEEDSDSDSDQDC).

This sequence belongs to the herpesviridae DNA polymerase accessory subunit family.

Increases the processivity of the viral polymerase, probably by acting as a sliding clamp that prevents dissociation of the polymerase from the active template. The chain is DNA polymerase processivity factor (59) from Alcelaphine herpesvirus 1 (strain C500) (AlHV-1).